Here is a 366-residue protein sequence, read N- to C-terminus: G-protein coupled receptor 183-B (366 aa).

Residues 1 to 24 lie on the Extracellular side of the membrane; the sequence is MMSPDLDLNFSSNCNLYDHRPVAR. Asparagine 9 is a glycosylation site (N-linked (GlcNAc...) asparagine). Residues 25–50 traverse the membrane as a helical segment; that stretch reads VLIPLVYSIICPVGLLGNALALHVVI. The Cytoplasmic portion of the chain corresponds to 51–70; sequence SSTTKINSITLYSANLAVSD. A helical transmembrane segment spans residues 71 to 88; that stretch reads ILFCLSLPLRAVYYGLGF. Topologically, residues 89 to 98 are extracellular; the sequence is HWPMGEVLCK. Cysteine 97 and cysteine 175 are disulfide-bonded. The helical transmembrane segment at 99 to 120 threads the bilayer; it reads AIALLFYLNCYAGVNFMTCLAV. Residues 121-142 lie on the Cytoplasmic side of the membrane; the sequence is DRFVALVFPARLAKLRKAKNVR. Residues 143-161 form a helical membrane-spanning segment; the sequence is FVCLAIWLLVLAQTLPLLT. At 162-187 the chain is on the extracellular side; the sequence is IGLTKTEPDSSITCMEYPNFEGVFKG. Residues 188-210 traverse the membrane as a helical segment; it reads LPYMLIVAVVLGFGIPVMTIIAC. At 211–236 the chain is on the cytoplasmic side; the sequence is YSILTHKLHQAAKSNQLTERSGKTKK. The helical transmembrane segment at 237–260 threads the bilayer; the sequence is ARGVIAGVVFVFVVCFSPYHIDIL. Residues 261 to 280 lie on the Extracellular side of the membrane; that stretch reads QYMIRKLLYETDCKELQSFQ. A helical membrane pass occupies residues 281–305; the sequence is ISLHITVCLMNLNSCLDPFVYFFAC. Topologically, residues 306–366 are cytoplasmic; the sequence is KGYKQKVMRM…QQICYQPSAT (61 aa).

This sequence belongs to the G-protein coupled receptor 1 family.

The protein localises to the cell membrane. Functionally, probable receptor for oxysterols that plays a central role during humoral immunity. Promotes activated B-cell localization in the outer follicle and interfollicular regions. The polypeptide is G-protein coupled receptor 183-B (gpr183b) (Danio rerio (Zebrafish)).